The chain runs to 211 residues: uncharacterized protein (211 aa).

This is an uncharacterized protein from Treponema pallidum (strain Nichols).